Reading from the N-terminus, the 479-residue chain is Aspartyl/glutamyl-tRNA(Asn/Gln) amidotransferase subunit B (479 aa).

Belongs to the GatB/GatE family. GatB subfamily. As to quaternary structure, heterotrimer of A, B and C subunits.

The enzyme catalyses L-glutamyl-tRNA(Gln) + L-glutamine + ATP + H2O = L-glutaminyl-tRNA(Gln) + L-glutamate + ADP + phosphate + H(+). It carries out the reaction L-aspartyl-tRNA(Asn) + L-glutamine + ATP + H2O = L-asparaginyl-tRNA(Asn) + L-glutamate + ADP + phosphate + 2 H(+). In terms of biological role, allows the formation of correctly charged Asn-tRNA(Asn) or Gln-tRNA(Gln) through the transamidation of misacylated Asp-tRNA(Asn) or Glu-tRNA(Gln) in organisms which lack either or both of asparaginyl-tRNA or glutaminyl-tRNA synthetases. The reaction takes place in the presence of glutamine and ATP through an activated phospho-Asp-tRNA(Asn) or phospho-Glu-tRNA(Gln). This is Aspartyl/glutamyl-tRNA(Asn/Gln) amidotransferase subunit B from Streptococcus suis (strain 98HAH33).